A 130-amino-acid chain; its full sequence is Small ribosomal subunit protein uS9 (130 aa).

Residues 105 to 130 (TRDSRMKERKKPGLRGARRAPQFSKR) form a disordered region. Basic residues predominate over residues 111–130 (KERKKPGLRGARRAPQFSKR).

The protein belongs to the universal ribosomal protein uS9 family.

The polypeptide is Small ribosomal subunit protein uS9 (Lysinibacillus sphaericus (strain C3-41)).